We begin with the raw amino-acid sequence, 255 residues long: Taurine import ATP-binding protein TauB (255 aa).

Positions Leu2–Ser229 constitute an ABC transporter domain. Gly34–Thr41 is an ATP binding site.

It belongs to the ABC transporter superfamily. Taurine importer (TC 3.A.1.17.1) family. As to quaternary structure, the complex is composed of two ATP-binding proteins (TauB), two transmembrane proteins (TauC) and a solute-binding protein (TauA).

Its subcellular location is the cell inner membrane. The catalysed reaction is taurine(out) + ATP + H2O = taurine(in) + ADP + phosphate + H(+). Its function is as follows. Part of the ABC transporter complex TauABC involved in taurine import. Responsible for energy coupling to the transport system. The chain is Taurine import ATP-binding protein TauB from Escherichia coli (strain K12).